The chain runs to 547 residues: Membrane transporter D1 (547 aa).

Over 1–2 (MR) the chain is Cytoplasmic. The chain crosses the membrane as a helical span at residues 3 to 25 (ASVMLCAALGGFLFGYDTGVINA). The Extracellular segment spans residues 26 to 43 (ALFQMKDHFGFSEHSWQY). A helical transmembrane segment spans residues 44–64 (ALIVAIAIAGAFVGAFISGFI). Residues 65–78 (SAAFGRRPCIAVAD) lie on the Cytoplasmic side of the membrane. Residues 79–99 (ALFVIGSVLMGAAPNVEVVLV) form a helical membrane-spanning segment. The Extracellular portion of the chain corresponds to 100–101 (SR). Residues 102–122 (VIVGLAIGISSATIPVYLAEV) form a helical membrane-spanning segment. Residues 123–136 (TSPKHRGATIVLNN) lie on the Cytoplasmic side of the membrane. The chain crosses the membrane as a helical span at residues 137-157 (LFLTGGQFVAAGFTAIMVVFT). The Extracellular portion of the chain corresponds to 158-164 (SKNIGWR). Residues 165-185 (VAIGIGALPAVVQAFCLLFFL) form a helical membrane-spanning segment. The Cytoplasmic segment spans residues 186 to 245 (PESPRWLLSKGHADRAKAVADKFEVDLCEFQEGDELPSVRIDYRPLMARDMRFRVVLSSG). The helical transmembrane segment at 246 to 266 (LQIIQQFSGINTIMYYSSVIL) threads the bilayer. At 267–276 (YDAGFRDAIM) the chain is on the extracellular side. The helical transmembrane segment at 277–297 (PVVLSIPLAFMNALFTAVAIF) threads the bilayer. Residues 298–308 (TVDRFGRRRML) lie on the Cytoplasmic side of the membrane. A helical transmembrane segment spans residues 309–329 (LISVFGCLVLLVVIAIIGFFI). Over 330 to 339 (GTRISYSVGG) the chain is Extracellular. The helical transmembrane segment at 340-360 (GLFLALLAVFLALYAPGIGCI) threads the bilayer. At 361-385 (PWVIMGEIFPTHLRTSAASVATMAN) the chain is on the cytoplasmic side. The helical transmembrane segment at 386-406 (WGANVLVSQVFPILMGAIGVG) threads the bilayer. Position 407 (Gly407) is a topological domain, extracellular. Residues 408 to 428 (TFTIISGLMALGCIFVYFFAV) traverse the membrane as a helical segment. Residues 429 to 547 (ETKGLTLEQI…AIKAAPHEPK (119 aa)) are Cytoplasmic-facing. Disordered regions lie at residues 449 to 468 (PPRFHEEGESGESGAGYRED) and 510 to 547 (VSNKFEERATSSSSDPQSLENQDEVRQAAIKAAPHEPK). Over residues 519–529 (TSSSSDPQSLE) the composition is skewed to polar residues.

It belongs to the major facilitator superfamily. Sugar transporter (TC 2.A.1.1) family.

Its subcellular location is the membrane. This Leishmania donovani protein is Membrane transporter D1.